The sequence spans 728 residues: Catalase-peroxidase 2 (728 aa).

The segment at residues 91–214 (WHAAGTYRTG…LAAVQMGLIY (124 aa)) is a cross-link (tryptophyl-tyrosyl-methioninium (Trp-Tyr) (with M-240)). Catalysis depends on His92, which acts as the Proton acceptor. A cross-link (tryptophyl-tyrosyl-methioninium (Tyr-Met) (with W-91)) is located at residues 214 to 240 (YVNPEGPNGNPDPAKAAVDIRETFARM). Position 255 (His255) interacts with heme b. The interval 338-362 (WKPNGDAGANSIPDPYDPSRRRGPT) is disordered.

The protein belongs to the peroxidase family. Peroxidase/catalase subfamily. In terms of assembly, homodimer or homotetramer. It depends on heme b as a cofactor. Formation of the three residue Trp-Tyr-Met cross-link is important for the catalase, but not the peroxidase activity of the enzyme.

The catalysed reaction is H2O2 + AH2 = A + 2 H2O. The enzyme catalyses 2 H2O2 = O2 + 2 H2O. Functionally, bifunctional enzyme with both catalase and broad-spectrum peroxidase activity. The polypeptide is Catalase-peroxidase 2 (Cupriavidus pinatubonensis (strain JMP 134 / LMG 1197) (Cupriavidus necator (strain JMP 134))).